A 365-amino-acid chain; its full sequence is Putative tRNA 2'-phosphotransferase (365 aa).

Disordered stretches follow at residues 1–35 and 231–254; these read MYKN…IRPR and LLDA…PESI. The segment covering 17-27 has biased composition (low complexity); that stretch reads SGTPATKSSSK.

Belongs to the KptA/TPT1 family.

The enzyme catalyses 2'-phospho-[ligated tRNA] + NAD(+) = mature tRNA + ADP-alpha-D-ribose 1'',2''-cyclic phosphate + nicotinamide. Its function is as follows. Catalyzes the last step of tRNA splicing, the transfer of the splice junction 2'-phosphate from ligated tRNA to NAD to produce ADP-ribose 1''-2'' cyclic phosphate. In Schizosaccharomyces pombe (strain 972 / ATCC 24843) (Fission yeast), this protein is Putative tRNA 2'-phosphotransferase.